A 135-amino-acid chain; its full sequence is UPF0225 protein CV_3559 (135 aa).

This sequence belongs to the UPF0225 family.

The chain is UPF0225 protein CV_3559 from Chromobacterium violaceum (strain ATCC 12472 / DSM 30191 / JCM 1249 / CCUG 213 / NBRC 12614 / NCIMB 9131 / NCTC 9757 / MK).